Reading from the N-terminus, the 343-residue chain is Hydroxymethylglutaryl-CoA synthase (343 aa).

Residues aspartate 28 and alanine 29 each contribute to the (3S)-3-hydroxy-3-methylglutaryl-CoA site. Glutamate 80 functions as the Proton donor/acceptor in the catalytic mechanism. Cysteine 112 serves as a coordination point for (3S)-3-hydroxy-3-methylglutaryl-CoA. Cysteine 112 acts as the Acyl-thioester intermediate in catalysis. Arginine 198 is a CoA binding site. Positions 200 and 233 each coordinate (3S)-3-hydroxy-3-methylglutaryl-CoA. The Proton donor/acceptor role is filled by histidine 233. Residue lysine 238 participates in CoA binding. Residues arginine 242, asparagine 265, and serine 295 each contribute to the (3S)-3-hydroxy-3-methylglutaryl-CoA site.

It belongs to the thiolase-like superfamily. Archaeal HMG-CoA synthase family. In terms of assembly, interacts with acetoacetyl-CoA thiolase that catalyzes the precedent step in the pathway and with a DUF35 protein. The acetoacetyl-CoA thiolase/HMG-CoA synthase complex channels the intermediate via a fused CoA-binding site, which allows for efficient coupling of the endergonic thiolase reaction with the exergonic HMGCS reaction.

The enzyme catalyses acetoacetyl-CoA + acetyl-CoA + H2O = (3S)-3-hydroxy-3-methylglutaryl-CoA + CoA + H(+). Its pathway is metabolic intermediate biosynthesis; (R)-mevalonate biosynthesis; (R)-mevalonate from acetyl-CoA: step 2/3. Functionally, catalyzes the condensation of acetyl-CoA with acetoacetyl-CoA to form 3-hydroxy-3-methylglutaryl-CoA (HMG-CoA). Functions in the mevalonate (MVA) pathway leading to isopentenyl diphosphate (IPP), a key precursor for the biosynthesis of isoprenoid compounds that are building blocks of archaeal membrane lipids. This Archaeoglobus fulgidus (strain ATCC 49558 / DSM 4304 / JCM 9628 / NBRC 100126 / VC-16) protein is Hydroxymethylglutaryl-CoA synthase.